We begin with the raw amino-acid sequence, 946 residues long: Alanine--tRNA ligase, cytoplasmic (946 aa).

4 residues coordinate Zn(2+): H591, H595, C710, and H714.

The protein belongs to the class-II aminoacyl-tRNA synthetase family. As to quaternary structure, monomer. Zn(2+) serves as cofactor.

Its subcellular location is the cytoplasm. It catalyses the reaction tRNA(Ala) + L-alanine + ATP = L-alanyl-tRNA(Ala) + AMP + diphosphate. Functionally, catalyzes the attachment of alanine to tRNA(Ala) in a two-step reaction: alanine is first activated by ATP to form Ala-AMP and then transferred to the acceptor end of tRNA(Ala). Also edits incorrectly charged tRNA(Ala) via its editing domain. This chain is Alanine--tRNA ligase, cytoplasmic (alaS), found in Dictyostelium discoideum (Social amoeba).